The chain runs to 291 residues: MAAKLLDDAGIDVRVLINDADDPIAEHSVLGRFTHVRHAADAADGAELVLVLGGDGTFLRAADMAHAVDLPVLGINLGHVGFLAEWESDSLEEALKRVIDRDYRIEDRMTLTVVVLDGGGEEIGRGWALNEVSIENLNRRGVLDATLEVDARPVASFGCDGVLISTPTGSTAYAFSAGGPVLWPELDAILVVPNNAHALFTKPLVVSPKSTVAVESNSDTSAAMAVMDGFRPIPMPPGSRVEVTRGERPVRWVRLDSSPFTDRLVSKLRLPVTGWRGPQKQAENKDPRSAG.

Catalysis depends on D55, which acts as the Proton acceptor. Residues 55-56 (DG), R60, 130-131 (NE), D160, and 171-176 (TAYAFS) contribute to the NAD(+) site.

Belongs to the NAD kinase family. It depends on a divalent metal cation as a cofactor.

The protein resides in the cytoplasm. The enzyme catalyses NAD(+) + ATP = ADP + NADP(+) + H(+). Functionally, involved in the regulation of the intracellular balance of NAD and NADP, and is a key enzyme in the biosynthesis of NADP. Catalyzes specifically the phosphorylation on 2'-hydroxyl of the adenosine moiety of NAD to yield NADP. This Corynebacterium glutamicum (strain ATCC 13032 / DSM 20300 / JCM 1318 / BCRC 11384 / CCUG 27702 / LMG 3730 / NBRC 12168 / NCIMB 10025 / NRRL B-2784 / 534) protein is NAD kinase.